We begin with the raw amino-acid sequence, 88 residues long: Putative membrane protein insertion efficiency factor (88 aa).

The disordered stretch occupies residues 67–88; that stretch reads LNAGGYDPVPPKSDNHSKENKK. Residues 79 to 88 are compositionally biased toward basic and acidic residues; the sequence is SDNHSKENKK.

It belongs to the UPF0161 family.

Its subcellular location is the cell inner membrane. Could be involved in insertion of integral membrane proteins into the membrane. The polypeptide is Putative membrane protein insertion efficiency factor (Actinobacillus succinogenes (strain ATCC 55618 / DSM 22257 / CCUG 43843 / 130Z)).